We begin with the raw amino-acid sequence, 299 residues long: tRNA dimethylallyltransferase (299 aa).

Position 11–18 (11–18 (GPTAVGKT)) interacts with ATP. 13 to 18 (TAVGKT) serves as a coordination point for substrate. Residues 36 to 39 (DSQQ) form an interaction with substrate tRNA region.

It belongs to the IPP transferase family. As to quaternary structure, monomer. It depends on Mg(2+) as a cofactor.

It carries out the reaction adenosine(37) in tRNA + dimethylallyl diphosphate = N(6)-dimethylallyladenosine(37) in tRNA + diphosphate. Catalyzes the transfer of a dimethylallyl group onto the adenine at position 37 in tRNAs that read codons beginning with uridine, leading to the formation of N6-(dimethylallyl)adenosine (i(6)A). The protein is tRNA dimethylallyltransferase of Streptococcus pyogenes serotype M1.